The following is a 259-amino-acid chain: Proteasome subunit alpha (259 aa).

This sequence belongs to the peptidase T1A family. In terms of assembly, the 20S proteasome core is composed of 14 alpha and 14 beta subunits that assemble into four stacked heptameric rings, resulting in a barrel-shaped structure. The two inner rings, each composed of seven catalytic beta subunits, are sandwiched by two outer rings, each composed of seven alpha subunits. The catalytic chamber with the active sites is on the inside of the barrel. Has a gated structure, the ends of the cylinder being occluded by the N-termini of the alpha-subunits. Is capped at one or both ends by the proteasome regulatory ATPase, PAN.

It localises to the cytoplasm. With respect to regulation, the formation of the proteasomal ATPase PAN-20S proteasome complex, via the docking of the C-termini of PAN into the intersubunit pockets in the alpha-rings, triggers opening of the gate for substrate entry. Interconversion between the open-gate and close-gate conformations leads to a dynamic regulation of the 20S proteasome proteolysis activity. In terms of biological role, component of the proteasome core, a large protease complex with broad specificity involved in protein degradation. The protein is Proteasome subunit alpha of Methanococcus maripaludis (strain C5 / ATCC BAA-1333).